The sequence spans 344 residues: Holliday junction branch migration complex subunit RuvB (344 aa).

Positions 1 to 183 are large ATPase domain (RuvB-L); the sequence is MLDERLISSH…FGISCRLDFY (183 aa). ATP contacts are provided by residues Ile-22, Arg-23, Gly-64, Lys-67, Thr-68, Thr-69, 130-132, Arg-173, Tyr-183, and Arg-220; that span reads EDY. Thr-68 contributes to the Mg(2+) binding site. A small ATPAse domain (RuvB-S) region spans residues 184-254; it reads TPLELSEIIL…LAKWALEMLE (71 aa). The segment at 257–344 is head domain (RuvB-H); it reads ECGLDVMDRM…LEGKGLFSDA (88 aa). 2 residues coordinate DNA: Lys-312 and Arg-317.

It belongs to the RuvB family. In terms of assembly, homohexamer. Forms an RuvA(8)-RuvB(12)-Holliday junction (HJ) complex. HJ DNA is sandwiched between 2 RuvA tetramers; dsDNA enters through RuvA and exits via RuvB. An RuvB hexamer assembles on each DNA strand where it exits the tetramer. Each RuvB hexamer is contacted by two RuvA subunits (via domain III) on 2 adjacent RuvB subunits; this complex drives branch migration. In the full resolvosome a probable DNA-RuvA(4)-RuvB(12)-RuvC(2) complex forms which resolves the HJ.

It is found in the cytoplasm. It catalyses the reaction ATP + H2O = ADP + phosphate + H(+). Its function is as follows. The RuvA-RuvB-RuvC complex processes Holliday junction (HJ) DNA during genetic recombination and DNA repair, while the RuvA-RuvB complex plays an important role in the rescue of blocked DNA replication forks via replication fork reversal (RFR). RuvA specifically binds to HJ cruciform DNA, conferring on it an open structure. The RuvB hexamer acts as an ATP-dependent pump, pulling dsDNA into and through the RuvAB complex. RuvB forms 2 homohexamers on either side of HJ DNA bound by 1 or 2 RuvA tetramers; 4 subunits per hexamer contact DNA at a time. Coordinated motions by a converter formed by DNA-disengaged RuvB subunits stimulates ATP hydrolysis and nucleotide exchange. Immobilization of the converter enables RuvB to convert the ATP-contained energy into a lever motion, pulling 2 nucleotides of DNA out of the RuvA tetramer per ATP hydrolyzed, thus driving DNA branch migration. The RuvB motors rotate together with the DNA substrate, which together with the progressing nucleotide cycle form the mechanistic basis for DNA recombination by continuous HJ branch migration. Branch migration allows RuvC to scan DNA until it finds its consensus sequence, where it cleaves and resolves cruciform DNA. The chain is Holliday junction branch migration complex subunit RuvB from Syntrophomonas wolfei subsp. wolfei (strain DSM 2245B / Goettingen).